We begin with the raw amino-acid sequence, 219 residues long: Flagellin A (219 aa).

Residues 1–12 (MKVKEFMNNKKG) constitute a propeptide that is removed on maturation. N-linked (GlcNAc...) asparagine glycans are attached at residues N38 and N175.

This sequence belongs to the archaeal flagellin family. In terms of processing, N-linked glycans consist of the 779 Da trisaccharide beta-ManNAc(Thr)-(1-4)-beta-GlcNAc3NAcA-(1-3)-beta-GlcNAc.

The protein localises to the archaeal flagellum. In terms of biological role, flagellin is the subunit protein which polymerizes to form the filaments of archaeal flagella. This Methanococcus voltae protein is Flagellin A (flaA).